The following is a 96-amino-acid chain: Tenecin-3 (96 aa).

An N-terminal signal peptide occupies residues 1–18 (MKTFVICLILVVAVSAAP). The tract at residues 19-96 (DHHDGHLGGH…HQGGYKTHGH (78 aa)) is disordered. Tandem repeats lie at residues 23 to 26 (GHLG), 31 to 34 (GHQG), 35 to 38 (GQQG), 39 to 42 (GHLG), 43 to 46 (GQQG), 47 to 50 (GHLG), 51 to 54 (GHQG), 59 to 62 (GHLG), 63 to 66 (GHQG), 67 to 70 (GIGG), 77 to 80 (GQHG), and 86 to 89 (GHQG). The segment at 23–89 (GHLGGHQTGH…GPGTGAGHQG (67 aa)) is 12 X 4 AA repeats of G-X-X-G. Over residues 26–89 (GGHQTGHQGG…GPGTGAGHQG (64 aa)) the composition is skewed to gly residues.

This sequence to H.diomphalia holotricin 3.

It is found in the secreted. Functionally, antifungal heat stable protein produced in response to injury. It is active against C.albicans. No antibacterial activity against Gram-positive and Gram-negative bacteria. This Tenebrio molitor (Yellow mealworm beetle) protein is Tenecin-3.